We begin with the raw amino-acid sequence, 208 residues long: Calaxin (208 aa).

3 consecutive EF-hand domains span residues 64–99, 100–135, and 145–180; these read TDDM…FLHG, TLEE…SLLK, and GVKD…ENLL. The Ca(2+) site is built by Asp-77, Asp-79, Asp-81, Asp-113, Asn-115, Asp-117, Tyr-119, Glu-124, Asp-158, Asp-160, Asp-162, Lys-164, and Asp-169.

Component of the outer dynein arm-docking complex along with ODAD1, ODAD2, ODAD3 and ODAD4.

The protein resides in the cytoplasm. It localises to the cytoskeleton. Its subcellular location is the cilium axoneme. It is found in the cell projection. The protein localises to the cilium. The protein resides in the flagellum. In terms of biological role, component of the outer dynein arm-docking complex (ODA-DC) that mediates outer dynein arms (ODA) binding onto the doublet microtubule. Seems to regulate the assembly of both ODAs and their axonemal docking complex onto ciliary microtubules. Regulates ciliary and flagellar motility and is required for cilia-driven determination of body laterality. In Xenopus laevis (African clawed frog), this protein is Calaxin (clxn).